Consider the following 413-residue polypeptide: MQESIIQWHGATNTRVPFGIYTDTANADQEQQRIYRGEVWNYLCLESEIPGAGDFRTTFAGETPIVVVRDADQEIYAFENRCAHRGALIALEKSGRTDSFQCVYHAWSYNRQGDLTGVAFEKGVKGQGGMPASFCKEEHGPRKLRVAVFCGLVFGSFSEDVPSIEDYLGPEICERIERVLHKPVEVIGRFTQKLPNNWKLYFENVKDSYHASLLHMFFTTFELNRLSQKGGVIVDESGGHHVSYSMIDRGAKDDSYKDQAIRSDNERYRLKDPSLLEGFEEFEDGVTLQILSVFPGFVLQQIQNSIAVRQLLPKSISSSELNWTYLGYADDSAEQRKVRLKQANLIGPAGFISMEDGAVGGFVQRGIAGAANLDAVIEMGGDHEGSSEGRATETSVRGFWKAYRKHMGQEMQA.

Positions 41–144 (NYLCLESEIP…CKEEHGPRKL (104 aa)) constitute a Rieske domain. 4 residues coordinate [2Fe-2S] cluster: C82, H84, C102, and H105.

This sequence belongs to the bacterial ring-hydroxylating dioxygenase alpha subunit family. As to quaternary structure, heterotetramer composed of 2 alpha (TphA2I and TphA2II) and 2 beta (TphA3I and TphA3II) subunits. Part of a multicomponent enzyme system composed of a reductase (TphA1I or TphA1II) and a two-subunit oxygenase component (TphA2I or TphA2II and TphA3I or TphA3II). Fe cation is required as a cofactor. [2Fe-2S] cluster serves as cofactor.

It carries out the reaction terephthalate + NADH + O2 + H(+) = (3S,4R)-3,4-dihydroxycyclohexa-1,5-diene-1,4-dicarboxylate + NAD(+). Inhibited by EDTA. In terms of biological role, component of the terephthalate 1,2-dioxygenase multicomponent enzyme system which catalyzes the dioxygenation of terephthalate (TER/TPA) to 1,2-dihydroxy-3,5-cyclohexadiene-1,4-dicarboxylic acid (DCD). It can also use 2,5-dicarboxypyridine (PDC) and 1,4-napthalenedicarboxylic acid (NDC) as substrates, and preferentially uses NADPH which is the physiological electron donor. This is Terephthalate 1,2-dioxygenase, terminal oxygenase component subunit alpha 2 (tphA2II) from Comamonas sp.